The chain runs to 297 residues: Phosphoribosylaminoimidazole-succinocarboxamide synthase (297 aa).

This sequence belongs to the SAICAR synthetase family.

It carries out the reaction 5-amino-1-(5-phospho-D-ribosyl)imidazole-4-carboxylate + L-aspartate + ATP = (2S)-2-[5-amino-1-(5-phospho-beta-D-ribosyl)imidazole-4-carboxamido]succinate + ADP + phosphate + 2 H(+). It functions in the pathway purine metabolism; IMP biosynthesis via de novo pathway; 5-amino-1-(5-phospho-D-ribosyl)imidazole-4-carboxamide from 5-amino-1-(5-phospho-D-ribosyl)imidazole-4-carboxylate: step 1/2. This chain is Phosphoribosylaminoimidazole-succinocarboxamide synthase, found in Mycobacterium tuberculosis (strain ATCC 25177 / H37Ra).